We begin with the raw amino-acid sequence, 294 residues long: Bifunctional protein FolD (294 aa).

Residues G166–S168, S191, and I232 contribute to the NADP(+) site.

Belongs to the tetrahydrofolate dehydrogenase/cyclohydrolase family. Homodimer.

It catalyses the reaction (6R)-5,10-methylene-5,6,7,8-tetrahydrofolate + NADP(+) = (6R)-5,10-methenyltetrahydrofolate + NADPH. The enzyme catalyses (6R)-5,10-methenyltetrahydrofolate + H2O = (6R)-10-formyltetrahydrofolate + H(+). Its pathway is one-carbon metabolism; tetrahydrofolate interconversion. Functionally, catalyzes the oxidation of 5,10-methylenetetrahydrofolate to 5,10-methenyltetrahydrofolate and then the hydrolysis of 5,10-methenyltetrahydrofolate to 10-formyltetrahydrofolate. In Bradyrhizobium sp. (strain BTAi1 / ATCC BAA-1182), this protein is Bifunctional protein FolD.